The following is a 436-amino-acid chain: MKPLVALVGRPNVGKSTLFNRITHQKSAIVDSTPGVTRDRHIMPAEWIGKEFLVMDTGGYCHDSDGISKAMLEQTLTAIGEADVIIFLVDVRSGLTYLDLDMAKLLKRDFNDKPVYFAVNKVESPQLAYEGESFRKTGFTEPWFISARDGSGVADLLDAVVDSFEEKSGQEEEDDSIRLAIIGRPNVGKSSFVNALLGTNRNIVSNKPGTTRDAIDTRFKRNGREIVLIDTAGLRKRARIDAGIEFYSSLRTERAIERCDVALVLIDAEQGLEKQDMKIIEMAAERKKGVLLLVNKWDLIEKDSKTSKLYSDRMYDDMGNLGWIPIQFISAMTKKNLYRAIDAALDIQEQRSQQITTSDLNRFLQDTLLQAPPSSKSGKELKIKYMTQIRAPWPVFAFFCNDPKLLQNNYKRFLEKRIRQNYNLSGVPFSLRFMQK.

EngA-type G domains are found at residues 3–168 (PLVA…EEKS) and 177–352 (IRLA…EQRS). GTP contacts are provided by residues 9 to 16 (GRPNVGKS), 56 to 60 (DTGGY), 120 to 123 (NKVE), 183 to 190 (GRPNVGKS), 230 to 234 (DTAGL), and 295 to 298 (NKWD). A KH-like domain is found at 353–436 (QQITTSDLNR…VPFSLRFMQK (84 aa)).

The protein belongs to the TRAFAC class TrmE-Era-EngA-EngB-Septin-like GTPase superfamily. EngA (Der) GTPase family. As to quaternary structure, associates with the 50S ribosomal subunit.

Its function is as follows. GTPase that plays an essential role in the late steps of ribosome biogenesis. The polypeptide is GTPase Der (Prosthecochloris aestuarii (strain DSM 271 / SK 413)).